Reading from the N-terminus, the 663-residue chain is UvrABC system protein B (663 aa).

Residues 31–271 enclose the Helicase ATP-binding domain; sequence DNIEGGEKAQ…EQSISKIQAE (241 aa). 44–51 is an ATP binding site; sequence GATGTGKT. A Beta-hairpin motif is present at residues 97-120; sequence YYDYYQPEAYVPSSDTYIEKDSSV. The Helicase C-terminal domain occupies 435–601; the sequence is QMDDLLGEIN…TIKKDIRDLI (167 aa). Positions 627-662 constitute a UVR domain; sequence QEAIKQLQKNMQEAAELLDFELAAQLRDLILELKAM.

It belongs to the UvrB family. In terms of assembly, forms a heterotetramer with UvrA during the search for lesions. Interacts with UvrC in an incision complex.

The protein localises to the cytoplasm. Functionally, the UvrABC repair system catalyzes the recognition and processing of DNA lesions. A damage recognition complex composed of 2 UvrA and 2 UvrB subunits scans DNA for abnormalities. Upon binding of the UvrA(2)B(2) complex to a putative damaged site, the DNA wraps around one UvrB monomer. DNA wrap is dependent on ATP binding by UvrB and probably causes local melting of the DNA helix, facilitating insertion of UvrB beta-hairpin between the DNA strands. Then UvrB probes one DNA strand for the presence of a lesion. If a lesion is found the UvrA subunits dissociate and the UvrB-DNA preincision complex is formed. This complex is subsequently bound by UvrC and the second UvrB is released. If no lesion is found, the DNA wraps around the other UvrB subunit that will check the other stand for damage. In Streptococcus equi subsp. zooepidemicus (strain H70), this protein is UvrABC system protein B.